The chain runs to 250 residues: DNA repair protein RecO (250 aa).

The protein belongs to the RecO family.

Its function is as follows. Involved in DNA repair and RecF pathway recombination. The chain is DNA repair protein RecO from Thermodesulfovibrio yellowstonii (strain ATCC 51303 / DSM 11347 / YP87).